The primary structure comprises 234 residues: MRAPLCLLLLVAHAVDMLALNRRKKQVGTGLGGNCTGCIICSEENGCSTCQQRLFLFIRREGIRQYGKCLHDCPPGYFGIRGQEVNRCKKCGATCESCFSQDFCIRCKRQFYLYKGKCLPTCPPGTLAHQNTRECQGECELGPWGGWSPCTHNGKTCGSAWGLESRVREAGRAGHEEAATCQVLSESRKCPIQRPCPGERSPGQKKGRKDRRPRKDRKLDRRLDVRPRQPGLQP.

An N-terminal signal peptide occupies residues M1 to A19. Residue N34 is glycosylated (N-linked (GlcNAc...) asparagine). Disulfide bonds link C35–C41, C38–C47, C50–C69, C73–C88, C91–C98, C95–C104, C107–C118, C122–C135, C139–C181, C150–C157, and C190–C196. An FU repeat occupies V85 to A128. Residues E138–P197 form the TSP type-1 domain. The interval C190–P234 is disordered. Residues G203–D216 are compositionally biased toward basic residues. Positions R217–P227 are enriched in basic and acidic residues.

It belongs to the R-spondin family. Binds heparin. Interacts with LGR4, LGR5 and LGR6. Post-translationally, tyr-112 may be phosphorylated; however as this position is probably extracellular, the vivo relevance is not proven.

The protein localises to the secreted. Its function is as follows. Activator of the canonical Wnt signaling pathway by acting as a ligand for LGR4-6 receptors. Upon binding to LGR4-6 (LGR4, LGR5 or LGR6), LGR4-6 associate with phosphorylated LRP6 and frizzled receptors that are activated by extracellular Wnt receptors, triggering the canonical Wnt signaling pathway to increase expression of target genes. Also regulates the canonical Wnt/beta-catenin-dependent pathway and non-canonical Wnt signaling by acting as an inhibitor of ZNRF3, an important regulator of the Wnt signaling pathway. The polypeptide is R-spondin-4 (RSPO4) (Homo sapiens (Human)).